A 147-amino-acid chain; its full sequence is MRLMGLDVGSKTVGISVSDPLGWTAQAVEIIPIDEENEIFGIDRVAELVKKEQVAGFVIGLPKNMNNTEGPRVEASQHYGKLLQQRFPDIPIDFQDERLTTVEAHRMLVEEADISRAKQKKVIDEVAATFILQSYLDRHGRLVNKLK.

It belongs to the YqgF nuclease family.

The protein localises to the cytoplasm. Its function is as follows. Could be a nuclease involved in processing of the 5'-end of pre-16S rRNA. The sequence is that of Putative pre-16S rRNA nuclease from Limosilactobacillus reuteri (strain DSM 20016) (Lactobacillus reuteri).